A 206-amino-acid polypeptide reads, in one-letter code: Small ribosomal subunit protein uS4 (206 aa).

The S4 RNA-binding domain maps to 96–156 (CRLDNVVYRM…EKAKNQLRIV (61 aa)).

The protein belongs to the universal ribosomal protein uS4 family. In terms of assembly, part of the 30S ribosomal subunit. Contacts protein S5. The interaction surface between S4 and S5 is involved in control of translational fidelity.

Functionally, one of the primary rRNA binding proteins, it binds directly to 16S rRNA where it nucleates assembly of the body of the 30S subunit. With S5 and S12 plays an important role in translational accuracy. This is Small ribosomal subunit protein uS4 from Pseudomonas savastanoi pv. phaseolicola (strain 1448A / Race 6) (Pseudomonas syringae pv. phaseolicola (strain 1448A / Race 6)).